The chain runs to 128 residues: Aspartate 1-decarboxylase (128 aa).

Serine 25 serves as the catalytic Schiff-base intermediate with substrate; via pyruvic acid. A Pyruvic acid (Ser) modification is found at serine 25. Position 57 (threonine 57) interacts with substrate. The active-site Proton donor is the tyrosine 58. 73-75 (GSA) serves as a coordination point for substrate.

The protein belongs to the PanD family. Heterooctamer of four alpha and four beta subunits. The cofactor is pyruvate. Post-translationally, is synthesized initially as an inactive proenzyme, which is activated by self-cleavage at a specific serine bond to produce a beta-subunit with a hydroxyl group at its C-terminus and an alpha-subunit with a pyruvoyl group at its N-terminus.

It localises to the cytoplasm. It catalyses the reaction L-aspartate + H(+) = beta-alanine + CO2. It functions in the pathway cofactor biosynthesis; (R)-pantothenate biosynthesis; beta-alanine from L-aspartate: step 1/1. Catalyzes the pyruvoyl-dependent decarboxylation of aspartate to produce beta-alanine. The protein is Aspartate 1-decarboxylase of Burkholderia cenocepacia (strain HI2424).